We begin with the raw amino-acid sequence, 351 residues long: Pleckstrin (351 aa).

Residues 4–101 form the PH 1 domain; it reads KRIREGYLVK…WVRDTKKAIK (98 aa). At lysine 64 the chain carries N6-acetyllysine. 2 positions are modified to phosphoserine: serine 113 and serine 117. The 86-residue stretch at 136-221 folds into the DEP domain; it reads IEKGIKELNL…NPDAFYYFPD (86 aa). The PH 2 domain maps to 244-348; that stretch reads VIIKQGCLLK…WIKAIQVASR (105 aa).

Functionally, major protein kinase C substrate of platelets. This chain is Pleckstrin (PLEK), found in Canis lupus familiaris (Dog).